Consider the following 224-residue polypeptide: Steroid receptor RNA activator 1 (224 aa).

2 disordered regions span residues M1 to S90 and A201 to S224. A phosphoserine mark is found at S48, S57, and S75. The segment covering P58–P76 has biased composition (pro residues). The segment covering A201–H215 has biased composition (basic and acidic residues).

The protein belongs to the SRA1 family. As to quaternary structure, SRA1 RNA exists in a ribonucleoprotein complex containing NCOA1. The RNA also forms a complex with PUS1 and RARG in the nucleus. Interacts with AR. Highly expressed in liver and skeletal muscle and to a lesser extent in brain. Also expressed in both normal and tumorigenic breast epithelial cell lines. Significantly up-regulated in human tumors of the breast, ovary, and uterus.

It is found in the nucleus. The protein localises to the cytoplasm. In terms of biological role, functional RNA which acts as a transcriptional coactivator that selectively enhances steroid receptor-mediated transactivation ligand-independently through a mechanism involving the modulating N-terminal domain (AF-1) of steroid receptors. Also mediates transcriptional coactivation of steroid receptors ligand-dependently through the steroid-binding domain (AF-2). Enhances cellular proliferation and differentiation and promotes apoptosis in vivo. May play a role in tumorigenesis. The polypeptide is Steroid receptor RNA activator 1 (Homo sapiens (Human)).